We begin with the raw amino-acid sequence, 190 residues long: Peptidoglycan recognition protein 1 (190 aa).

The first 21 residues, 1–21, serve as a signal peptide directing secretion; the sequence is MSRRYTPLAWVLLALLGLGAA. Gln22 carries the pyrrolidone carboxylic acid modification. Intrachain disulfides connect Cys24/Cys148, Cys40/Cys85, and Cys61/Cys67. Residues 46 to 174 form the N-acetylmuramoyl-L-alanine amidase domain; sequence QPVRYVVVSH…RDVQQTLSPG (129 aa).

This sequence belongs to the N-acetylmuramoyl-L-alanine amidase 2 family. Homodimer; disulfide-linked. In terms of tissue distribution, synthesized only in bone marrow. The mature protein is stored in the cytoplasmic granules of eosinophils and neutrophils but is absent from monocytes, lymphocytes, or platelets.

Its subcellular location is the secreted. The protein localises to the cytoplasmic granule. Innate immunity protein that plays several important functions in antimicrobial and antitumor defense systems. Acts as a pattern receptor that binds to murein peptidoglycans (PGN) of Gram-positive bacteria and thus provides bactericidal activity. Forms an equimolar complex with heat shock protein HSPA1A and induces programmed cell death through apoptosis and necroptosis in tumor cell lines by activating the TNFR1 receptor on the target cell membrane. In addition, acts in complex with the Ca(2+)-binding protein S100A4 as a chemoattractant able to induce lymphocyte movement. Mechanistically, this complex acts as a ligand of the chemotactic receptors CCR5 and CXCR3 which are present on the cells of the immune system. Also promotes the activation of lymphocytes that become able to kill virus-infected cells as well as tumor cells by modulating the spectrum of their target-cell specificity. Induction of cytotoxicity on monocyte surface requires interaction with TREM1 receptor. This Bos taurus (Bovine) protein is Peptidoglycan recognition protein 1 (PGLYRP1).